Reading from the N-terminus, the 398-residue chain is Enoyl-[acyl-carrier-protein] reductase [NADH] (398 aa).

NAD(+) is bound by residues 48–53 (GASTGY), 74–75 (FE), 111–112 (DA), and 139–140 (LA). Residue Tyr-225 participates in substrate binding. The Proton donor role is filled by Tyr-235. NAD(+) is bound by residues Lys-244 and 273-275 (VVT).

The protein belongs to the TER reductase family. As to quaternary structure, monomer.

The catalysed reaction is a 2,3-saturated acyl-[ACP] + NAD(+) = a (2E)-enoyl-[ACP] + NADH + H(+). Its pathway is lipid metabolism; fatty acid biosynthesis. Its function is as follows. Involved in the final reduction of the elongation cycle of fatty acid synthesis (FAS II). Catalyzes the reduction of a carbon-carbon double bond in an enoyl moiety that is covalently linked to an acyl carrier protein (ACP). The sequence is that of Enoyl-[acyl-carrier-protein] reductase [NADH] from Paraburkholderia xenovorans (strain LB400).